A 38-amino-acid polypeptide reads, in one-letter code: Kappa-theraphotoxin-Hm2a (38 aa).

3 cysteine pairs are disulfide-bonded: C2–C16, C9–C21, and C15–C32. The residue at position 38 (F38) is a Phenylalanine amide.

Belongs to the neurotoxin 10 (Hwtx-1) family. 13 (Hntx-13) subfamily. Expressed by the venom gland.

It is found in the secreted. In terms of biological role, inhibitor of voltage-gated potassium channels. It specifically inhibits Kv2.1/KCNB1 channels. The chain is Kappa-theraphotoxin-Hm2a from Heteroscodra maculata (Togo starburst tarantula).